We begin with the raw amino-acid sequence, 286 residues long: UDP-3-O-acyl-N-acetylglucosamine deacetylase (286 aa).

Zn(2+)-binding residues include His79, His237, and Asp241. The active-site Proton donor is His264.

The protein belongs to the LpxC family. Zn(2+) serves as cofactor.

It catalyses the reaction a UDP-3-O-[(3R)-3-hydroxyacyl]-N-acetyl-alpha-D-glucosamine + H2O = a UDP-3-O-[(3R)-3-hydroxyacyl]-alpha-D-glucosamine + acetate. It functions in the pathway glycolipid biosynthesis; lipid IV(A) biosynthesis; lipid IV(A) from (3R)-3-hydroxytetradecanoyl-[acyl-carrier-protein] and UDP-N-acetyl-alpha-D-glucosamine: step 2/6. Catalyzes the hydrolysis of UDP-3-O-myristoyl-N-acetylglucosamine to form UDP-3-O-myristoylglucosamine and acetate, the committed step in lipid A biosynthesis. This chain is UDP-3-O-acyl-N-acetylglucosamine deacetylase, found in Brucella abortus (strain 2308).